The sequence spans 942 residues: Lambda-carrageenase (942 aa).

The N-terminal stretch at 1–25 is a signal peptide; it reads MKIKILSAMIASSLLIGCVIPTVKA.

Monomer.

The protein resides in the secreted. The enzyme catalyses Endohydrolysis of (1-&gt;4)-beta-linkages in the backbone of lambda-carrageenan, resulting in the tetrasaccharide alpha-D-Galp2,6S2-(1-&gt;3)-beta-D-Galp2S-(1-&gt;4)-alpha-D-Galp2,6S2-(1-&gt;3)-D-Galp2S.. Hydrolyzes lambda-carrageenan with inversion of anomeric configuration. Does not hydrolyze iota- and kappa-carrageenans, agarose or porphyran. The chain is Lambda-carrageenase from Pseudoalteromonas sp.